The primary structure comprises 399 residues: Elongation factor Tu (399 aa).

Positions 10–209 (KPHVNIGTIG…AVDSYIPTPV (200 aa)) constitute a tr-type G domain. Residues 19–26 (GHVDHGKT) form a G1 region. 19-26 (GHVDHGKT) is a binding site for GTP. Thr-26 contributes to the Mg(2+) binding site. Positions 60–64 (GITIA) are G2. The segment at 81 to 84 (DCPG) is G3. GTP-binding positions include 81-85 (DCPGH) and 136-139 (NKAD). The segment at 136-139 (NKAD) is G4. The interval 174 to 176 (SAL) is G5.

Belongs to the TRAFAC class translation factor GTPase superfamily. Classic translation factor GTPase family. EF-Tu/EF-1A subfamily. Monomer.

Its subcellular location is the cytoplasm. It carries out the reaction GTP + H2O = GDP + phosphate + H(+). In terms of biological role, GTP hydrolase that promotes the GTP-dependent binding of aminoacyl-tRNA to the A-site of ribosomes during protein biosynthesis. This is Elongation factor Tu from Campylobacter fetus subsp. fetus (strain 82-40).